Here is a 303-residue protein sequence, read N- to C-terminus: MRADLDAFLEHLRSERQVSAHTLDGYRRDLLKILALAEKAGLSDWNALDTRSLRTFVARLHQQGQSSRSLARLLSATRGLYQYLLREGRCRHDPANGLSAPKSPRKLPRTLDADRALQLLDGAVEDDFIARRDQALLELFYSSGLRLSELVGLDLEWLDLKEGLVRVRGKGNKVRELPVGKAARQALEAWLPLRAQAAPEDGAVFIGRGGKRLTPRAIQLRVRQAGVRELGQHLHPHMLRHSFASHLLESSGDLRAVQELLGHADIATTQIYTHLDFQHLASVYDRAHPRAKRKGNADGGNDP.

The Core-binding (CB) domain occupies 1 to 85 (MRADLDAFLE…ATRGLYQYLL (85 aa)). The region spanning 106 to 285 (KLPRTLDADR…DFQHLASVYD (180 aa)) is the Tyr recombinase domain. Catalysis depends on residues Arg146, Lys170, His237, Arg240, and His263. The active-site O-(3'-phospho-DNA)-tyrosine intermediate is Tyr272.

The protein belongs to the 'phage' integrase family. XerC subfamily. In terms of assembly, forms a cyclic heterotetrameric complex composed of two molecules of XerC and two molecules of XerD.

The protein localises to the cytoplasm. Its function is as follows. Site-specific tyrosine recombinase, which acts by catalyzing the cutting and rejoining of the recombining DNA molecules. The XerC-XerD complex is essential to convert dimers of the bacterial chromosome into monomers to permit their segregation at cell division. It also contributes to the segregational stability of plasmids. The sequence is that of Tyrosine recombinase XerC from Pseudomonas aeruginosa (strain LESB58).